We begin with the raw amino-acid sequence, 498 residues long: Histidine--tRNA ligase (498 aa).

Belongs to the class-II aminoacyl-tRNA synthetase family. Homodimer.

It is found in the cytoplasm. It catalyses the reaction tRNA(His) + L-histidine + ATP = L-histidyl-tRNA(His) + AMP + diphosphate + H(+). This Bartonella quintana (strain Toulouse) (Rochalimaea quintana) protein is Histidine--tRNA ligase.